Reading from the N-terminus, the 511-residue chain is Maturase K (511 aa).

The protein belongs to the intron maturase 2 family. MatK subfamily.

Its subcellular location is the plastid. It localises to the chloroplast. Usually encoded in the trnK tRNA gene intron. Probably assists in splicing its own and other chloroplast group II introns. The chain is Maturase K from Bromelia plumieri (Karatas).